We begin with the raw amino-acid sequence, 298 residues long: ATP synthase gamma chain (298 aa).

This sequence belongs to the ATPase gamma chain family. F-type ATPases have 2 components, CF(1) - the catalytic core - and CF(0) - the membrane proton channel. CF(1) has five subunits: alpha(3), beta(3), gamma(1), delta(1), epsilon(1). CF(0) has three main subunits: a, b and c.

It localises to the cell inner membrane. Produces ATP from ADP in the presence of a proton gradient across the membrane. The gamma chain is believed to be important in regulating ATPase activity and the flow of protons through the CF(0) complex. This chain is ATP synthase gamma chain, found in Wolinella succinogenes (strain ATCC 29543 / DSM 1740 / CCUG 13145 / JCM 31913 / LMG 7466 / NCTC 11488 / FDC 602W) (Vibrio succinogenes).